A 289-amino-acid polypeptide reads, in one-letter code: Xylosylprotein 4-beta-galactosyltransferase (289 aa).

At 1–6 (MKLKTR) the chain is on the cytoplasmic side. A helical; Signal-anchor for type II membrane protein membrane pass occupies residues 7-27 (LILSGTILISLAACYFLVLLV). Over 28 to 289 (LDLEITRDLM…DLNWTPYCKS (262 aa)) the chain is Lumenal. 58–62 (PYRDR) provides a ligand contact to UDP-alpha-D-galactose. N-linked (GlcNAc...) asparagine glycosylation is found at Asn81 and Asn90. UDP-alpha-D-galactose is bound by residues 97 to 99 (FNR), 123 to 124 (VD), Tyr154, and Trp184. Residue Asp124 participates in Mn(2+) binding. An N-acetyl-D-glucosamine-binding site is contributed by 186 to 189 (LEDD). N-linked (GlcNAc...) asparagine glycosylation is present at Asn201. Residues 214–236 (NTFRHIHGPKRKRDYTPKKNDKN) are disordered. Positions 217-226 (RHIHGPKRKR) are enriched in basic residues. His218 contributes to the Mn(2+) binding site. A UDP-alpha-D-galactose-binding site is contributed by 218-220 (HIH). Residues 227–236 (DYTPKKNDKN) show a composition bias toward basic and acidic residues.

The protein belongs to the glycosyltransferase 7 family. Requires Mn(2+) as cofactor.

It is found in the membrane. It catalyses the reaction 3-O-(beta-D-xylosyl)-L-seryl-[protein] + UDP-alpha-D-galactose = 3-O-(beta-D-galactosyl-(1-&gt;4)-beta-D-xylosyl)-L-seryl-[protein] + UDP + H(+). It participates in protein modification; protein glycosylation. Functionally, glycosyltransferase required for the biosynthesis of the tetrasaccharide (GlcA-Gal-Gal-Xyl-)Ser core linker of heparan sulfate and chondroitin sulfate. Required for embryonic development. Involved in vulval epithelium invagination. Required for axon regeneration after injury. The protein is Xylosylprotein 4-beta-galactosyltransferase (sqv-3) of Caenorhabditis elegans.